The primary structure comprises 196 residues: MLQNPIHLRLERLESWQHVTFMACLCERMYPNYAMFCQQTGFGDGQIYRRILDLIWETLTVKDAKVNFDSQLEKFEEAIPSADDFDLYGVYPAIDACVALSELVHSRLSGETLEHAVEVSKTSITTVAMLEMTQAGREMSDEELKENPAVEQEWDIQWEIFRLLAECEERDIELIKGLRADLREAGESNIGIIFQQ.

This sequence to H.influenzae HI_0431.

This is an uncharacterized protein from Escherichia coli (strain K12).